Reading from the N-terminus, the 433-residue chain is Peptidoglycan DD-endopeptidase ShyC (433 aa).

Residues 10 to 30 (WLHRVLITAFSAIIVFAIFFL) traverse the membrane as a helical segment. Zn(2+)-binding residues include H299, D303, and H380.

This sequence belongs to the peptidase M23B family. It depends on Zn(2+) as a cofactor.

It localises to the cell inner membrane. It functions in the pathway cell wall degradation; peptidoglycan degradation. Its activity is regulated as follows. Reduced activity in 0.5 mM EDTA and a complete loss of activity at higher EDTA concentrations. Cell wall peptidoglycan (PG) DD-endopeptidase. Hydrolyzes peptide cross-links which covalently connect adjacent PG strands probably to allow insertion of new glycans and thus cell wall expansion. Degrades purified whole PG sacculi in vitro. In Vibrio cholerae serotype O1 (strain ATCC 39315 / El Tor Inaba N16961), this protein is Peptidoglycan DD-endopeptidase ShyC.